A 136-amino-acid polypeptide reads, in one-letter code: Protein NrdI (136 aa).

The protein belongs to the NrdI family.

Functionally, probably involved in ribonucleotide reductase function. The sequence is that of Protein NrdI from Escherichia coli O7:K1 (strain IAI39 / ExPEC).